The following is a 110-amino-acid chain: Thioredoxin (110 aa).

The Thioredoxin domain occupies 3–108 (KPIEVHDSDF…YREIFDKVLA (106 aa)). The cysteines at positions 32 and 35 are disulfide-linked. An N6,N6-dimethyllysine; alternate modification is found at K105. K105 is subject to N6-methyllysine; alternate.

In terms of biological role, participates in various redox reactions through the reversible oxidation of its active center dithiol to a disulfide and catalyzes dithiol-disulfide exchange reactions. The protein is Thioredoxin (trxA) of Chloroflexus aurantiacus (strain ATCC 29366 / DSM 635 / J-10-fl).